The sequence spans 1047 residues: Atrial natriuretic peptide receptor 2 (1047 aa).

The N-terminal stretch at 1 to 22 (MALPSLLLLVAALAGGVRPPGA) is a signal peptide. Over 23–458 (RNLTLAVVLP…DKTPLSTLAI (436 aa)) the chain is Extracellular. Asparagine 24 and asparagine 35 each carry an N-linked (GlcNAc...) asparagine glycan. Cysteine 75 and cysteine 101 are joined by a disulfide. 5 N-linked (GlcNAc...) asparagine glycosylation sites follow: asparagine 161, asparagine 195, asparagine 244, asparagine 277, and asparagine 349. Residues 459 to 478 (VALGTGITFIMFGVSSFLIF) traverse the membrane as a helical segment. At 479 to 1047 (RKLMLEKELA…GERKGPPGLL (569 aa)) the chain is on the cytoplasmic side. A Phosphoserine modification is found at serine 513. The Protein kinase domain occupies 513-786 (SRLTLSLRGS…PDFGQIKGFI (274 aa)). Threonine 516 is subject to Phosphothreonine. Serine 518, serine 522, serine 523, and serine 526 each carry phosphoserine. Residue threonine 529 is modified to Phosphothreonine. A Guanylate cyclase domain is found at 861 to 991 (TIYFSDIVGF…DTVNTASRME (131 aa)).

Belongs to the adenylyl cyclase class-4/guanylyl cyclase family. In terms of processing, phosphorylated. Phosphorylation of the protein kinase-like domain is required for full activation by CNP. Glycosylated.

Its subcellular location is the cell membrane. It carries out the reaction GTP = 3',5'-cyclic GMP + diphosphate. In terms of biological role, receptor for the C-type natriuretic peptide NPPC/CNP hormone. Has guanylate cyclase activity upon binding of its ligand. May play a role in the regulation of skeletal growth. This Homo sapiens (Human) protein is Atrial natriuretic peptide receptor 2 (NPR2).